We begin with the raw amino-acid sequence, 312 residues long: Glyoxylate/hydroxypyruvate reductase A (312 aa).

Residue Arg227 is part of the active site. The active-site Proton donor is His275.

Belongs to the D-isomer specific 2-hydroxyacid dehydrogenase family. GhrA subfamily.

The protein localises to the cytoplasm. It carries out the reaction glycolate + NADP(+) = glyoxylate + NADPH + H(+). The catalysed reaction is (R)-glycerate + NAD(+) = 3-hydroxypyruvate + NADH + H(+). The enzyme catalyses (R)-glycerate + NADP(+) = 3-hydroxypyruvate + NADPH + H(+). Catalyzes the NADPH-dependent reduction of glyoxylate and hydroxypyruvate into glycolate and glycerate, respectively. The chain is Glyoxylate/hydroxypyruvate reductase A from Escherichia coli O157:H7.